Consider the following 382-residue polypeptide: Succinyl-diaminopimelate desuccinylase (382 aa).

His-68 contacts Zn(2+). The active site involves Asp-70. Residue Asp-101 coordinates Zn(2+). The active-site Proton acceptor is the Glu-135. Zn(2+) contacts are provided by Glu-136, Glu-164, and His-350.

It belongs to the peptidase M20A family. DapE subfamily. In terms of assembly, homodimer. Requires Zn(2+) as cofactor. Co(2+) serves as cofactor.

The enzyme catalyses N-succinyl-(2S,6S)-2,6-diaminopimelate + H2O = (2S,6S)-2,6-diaminopimelate + succinate. It participates in amino-acid biosynthesis; L-lysine biosynthesis via DAP pathway; LL-2,6-diaminopimelate from (S)-tetrahydrodipicolinate (succinylase route): step 3/3. In terms of biological role, catalyzes the hydrolysis of N-succinyl-L,L-diaminopimelic acid (SDAP), forming succinate and LL-2,6-diaminopimelate (DAP), an intermediate involved in the bacterial biosynthesis of lysine and meso-diaminopimelic acid, an essential component of bacterial cell walls. The polypeptide is Succinyl-diaminopimelate desuccinylase (Acidithiobacillus ferrooxidans (strain ATCC 23270 / DSM 14882 / CIP 104768 / NCIMB 8455) (Ferrobacillus ferrooxidans (strain ATCC 23270))).